The primary structure comprises 149 residues: D-aminoacyl-tRNA deacylase (149 aa).

The Gly-cisPro motif, important for rejection of L-amino acids signature appears at 139-140 (GP).

The protein belongs to the DTD family. As to quaternary structure, homodimer.

It localises to the cytoplasm. It catalyses the reaction glycyl-tRNA(Ala) + H2O = tRNA(Ala) + glycine + H(+). It carries out the reaction a D-aminoacyl-tRNA + H2O = a tRNA + a D-alpha-amino acid + H(+). Its function is as follows. An aminoacyl-tRNA editing enzyme that deacylates mischarged D-aminoacyl-tRNAs. Also deacylates mischarged glycyl-tRNA(Ala), protecting cells against glycine mischarging by AlaRS. Acts via tRNA-based rather than protein-based catalysis; rejects L-amino acids rather than detecting D-amino acids in the active site. By recycling D-aminoacyl-tRNA to D-amino acids and free tRNA molecules, this enzyme counteracts the toxicity associated with the formation of D-aminoacyl-tRNA entities in vivo and helps enforce protein L-homochirality. In Candida glabrata (strain ATCC 2001 / BCRC 20586 / JCM 3761 / NBRC 0622 / NRRL Y-65 / CBS 138) (Yeast), this protein is D-aminoacyl-tRNA deacylase (DTD1).